The sequence spans 452 residues: Trigger factor (452 aa).

In terms of domain architecture, PPIase FKBP-type spans 169 to 254; it reads GDQLLIDFVG…VQEVRAPVDG (86 aa).

It belongs to the FKBP-type PPIase family. Tig subfamily.

The protein localises to the cytoplasm. It catalyses the reaction [protein]-peptidylproline (omega=180) = [protein]-peptidylproline (omega=0). Functionally, involved in protein export. Acts as a chaperone by maintaining the newly synthesized protein in an open conformation. Functions as a peptidyl-prolyl cis-trans isomerase. The sequence is that of Trigger factor (tig) from Caulobacter vibrioides (strain ATCC 19089 / CIP 103742 / CB 15) (Caulobacter crescentus).